We begin with the raw amino-acid sequence, 1134 residues long: Myosin-4 (1134 aa).

The 51-residue stretch at 110-160 folds into the Myosin N-terminal SH3-like domain; that stretch reads REKLCVWCRVAANGQWHLGKIHSTSSSDDVCVMLSANDDVRTMEEIFPANP. The Myosin motor domain maps to 164–830; sequence EGVEDLTQLS…VISVLEERKK (667 aa). ATP contacts are provided by residues 255–262 and 304–312; these read GESGAGKT and NDNSSRFGK. Actin-binding regions lie at residues 589 to 623 and 710 to 732; these read LIEK…KQHL and LFKL…KPNS. IQ domains lie at 832 to 861, 855 to 884, and 891 to 920; these read VLRG…AAVI, MRNA…SAIV, and ELDA…KNKP. A disordered region spans residues 913–939; that stretch reads STQQKNKPRNEKKKTRRKSTKRVSEDK. Residues 918–933 show a composition bias toward basic residues; that stretch reads NKPRNEKKKTRRKSTK. Residues 953 to 999 are a coiled coil; that stretch reads LADLQSRVLKVEAAIMQKEDENTALQEELQRFEERWLENETRMKSME.

Belongs to the TRAFAC class myosin-kinesin ATPase superfamily. Myosin family. Plant myosin class VIII subfamily. Homodimer.

In terms of biological role, myosin heavy chain that is required for the cell cycle-regulated transport of various organelles and proteins for their segregation. Functions by binding with its tail domain to receptor proteins on organelles and exerting force with its N-terminal motor domain against actin filaments, thereby transporting its cargo along polarized actin cables. The protein is Myosin-4 (VIII-B) of Arabidopsis thaliana (Mouse-ear cress).